The chain runs to 348 residues: Anthranilate phosphoribosyltransferase (348 aa).

Residues Gly-81, 84–85 (GD), 91–94 (NVST), 109–117 (KHGNRAVSG), and Ser-121 contribute to the 5-phospho-alpha-D-ribose 1-diphosphate site. Gly-81 lines the anthranilate pocket. Mg(2+) is bound at residue Ser-93. Residue Asn-112 coordinates anthranilate. Arg-167 contacts anthranilate. Residues Asp-226 and Glu-227 each coordinate Mg(2+).

This sequence belongs to the anthranilate phosphoribosyltransferase family. In terms of assembly, homodimer. The cofactor is Mg(2+).

It carries out the reaction N-(5-phospho-beta-D-ribosyl)anthranilate + diphosphate = 5-phospho-alpha-D-ribose 1-diphosphate + anthranilate. Its pathway is amino-acid biosynthesis; L-tryptophan biosynthesis; L-tryptophan from chorismate: step 2/5. Its function is as follows. Catalyzes the transfer of the phosphoribosyl group of 5-phosphorylribose-1-pyrophosphate (PRPP) to anthranilate to yield N-(5'-phosphoribosyl)-anthranilate (PRA). The protein is Anthranilate phosphoribosyltransferase of Azotobacter vinelandii (strain DJ / ATCC BAA-1303).